The sequence spans 190 residues: Putative 3-methyladenine DNA glycosylase (190 aa).

The protein belongs to the DNA glycosylase MPG family.

The polypeptide is Putative 3-methyladenine DNA glycosylase (Deinococcus radiodurans (strain ATCC 13939 / DSM 20539 / JCM 16871 / CCUG 27074 / LMG 4051 / NBRC 15346 / NCIMB 9279 / VKM B-1422 / R1)).